Here is a 135-residue protein sequence, read N- to C-terminus: Small ribosomal subunit protein uS12 (135 aa).

Position 89 is a 3-methylthioaspartic acid (Asp89). Residues 108–135 (NKRTVSRSKYGTKKAKATDKKATDNKKK) form a disordered region. A compositionally biased stretch (basic residues) spans 111–122 (TVSRSKYGTKKA). A compositionally biased stretch (basic and acidic residues) spans 123-135 (KATDKKATDNKKK).

This sequence belongs to the universal ribosomal protein uS12 family. As to quaternary structure, part of the 30S ribosomal subunit. Contacts proteins S8 and S17. May interact with IF1 in the 30S initiation complex.

In terms of biological role, with S4 and S5 plays an important role in translational accuracy. Its function is as follows. Interacts with and stabilizes bases of the 16S rRNA that are involved in tRNA selection in the A site and with the mRNA backbone. Located at the interface of the 30S and 50S subunits, it traverses the body of the 30S subunit contacting proteins on the other side and probably holding the rRNA structure together. The combined cluster of proteins S8, S12 and S17 appears to hold together the shoulder and platform of the 30S subunit. This Helicobacter pylori (strain P12) protein is Small ribosomal subunit protein uS12.